A 373-amino-acid polypeptide reads, in one-letter code: Inhibitor of nuclear factor kappa-B kinase-interacting protein (373 aa).

Basic residues predominate over residues 1-11; sequence MSEVKSRKKPG. The tract at residues 1 to 38 is disordered; sequence MSEVKSRKKPGPKVAAPEPEKRSDGRKNPEARGGAGWA. Basic and acidic residues predominate over residues 18–30; sequence EPEKRSDGRKNPE. Residues 43-59 traverse the membrane as a helical segment; sequence GLSLLSLATSLGLAWLV. Coiled-coil stretches lie at residues 64–257 and 290–325; these read EKFA…DKLS and TERKMEELTVQMFNMEDDMLKAVSEIMEMQNTLEGI. N-linked (GlcNAc...) asparagine glycosylation is present at Asn151.

Post-translationally, N-glycosylated at Asn-151.

It is found in the endoplasmic reticulum membrane. In terms of biological role, target of p53/TP53 with pro-apoptotic function. This is Inhibitor of nuclear factor kappa-B kinase-interacting protein (Ikbip) from Rattus norvegicus (Rat).